The sequence spans 108 residues: Small ribosomal subunit protein eS25B (108 aa).

Low complexity predominate over residues 1-20 (MPPKQQLSKAAKAAAALAGG). The segment at 1–30 (MPPKQQLSKAAKAAAALAGGKKSKKKWSKK) is disordered. Proline 2 is modified (n,N-dimethylproline; by NTM1). Over residues 21–30 (KKSKKKWSKK) the composition is skewed to basic residues.

Belongs to the eukaryotic ribosomal protein eS25 family. Component of the small ribosomal subunit (SSU). Mature yeast ribosomes consist of a small (40S) and a large (60S) subunit. The 40S small subunit contains 1 molecule of ribosomal RNA (18S rRNA) and 33 different proteins (encoded by 57 genes). The large 60S subunit contains 3 rRNA molecules (25S, 5.8S and 5S rRNA) and 46 different proteins (encoded by 81 genes).

The protein localises to the cytoplasm. Component of the ribosome, a large ribonucleoprotein complex responsible for the synthesis of proteins in the cell. The small ribosomal subunit (SSU) binds messenger RNAs (mRNAs) and translates the encoded message by selecting cognate aminoacyl-transfer RNA (tRNA) molecules. The large subunit (LSU) contains the ribosomal catalytic site termed the peptidyl transferase center (PTC), which catalyzes the formation of peptide bonds, thereby polymerizing the amino acids delivered by tRNAs into a polypeptide chain. The nascent polypeptides leave the ribosome through a tunnel in the LSU and interact with protein factors that function in enzymatic processing, targeting, and the membrane insertion of nascent chains at the exit of the ribosomal tunnel. This Saccharomyces cerevisiae (strain ATCC 204508 / S288c) (Baker's yeast) protein is Small ribosomal subunit protein eS25B.